Consider the following 444-residue polypeptide: Protein translocase subunit SecY (444 aa).

10 helical membrane passes run phenylalanine 24 to isoleucine 44, isoleucine 77 to valine 97, glycine 123 to valine 143, methionine 153 to glycine 173, isoleucine 181 to isoleucine 201, valine 215 to methionine 235, methionine 269 to alanine 289, tyrosine 318 to phenylalanine 338, leucine 376 to tryptophan 396, and phenylalanine 400 to glutamine 420.

This sequence belongs to the SecY/SEC61-alpha family. Component of the Sec protein translocase complex. Heterotrimer consisting of SecY, SecE and SecG subunits. The heterotrimers can form oligomers, although 1 heterotrimer is thought to be able to translocate proteins. Interacts with the ribosome. Interacts with SecDF, and other proteins may be involved. Interacts with SecA.

It is found in the cell inner membrane. The central subunit of the protein translocation channel SecYEG. Consists of two halves formed by TMs 1-5 and 6-10. These two domains form a lateral gate at the front which open onto the bilayer between TMs 2 and 7, and are clamped together by SecE at the back. The channel is closed by both a pore ring composed of hydrophobic SecY resides and a short helix (helix 2A) on the extracellular side of the membrane which forms a plug. The plug probably moves laterally to allow the channel to open. The ring and the pore may move independently. In Vibrio cholerae serotype O1 (strain ATCC 39315 / El Tor Inaba N16961), this protein is Protein translocase subunit SecY.